The following is a 438-amino-acid chain: RNA polymerase sigma factor SigA (438 aa).

Over residues 1–11 (MKKSKSKKKAA) the composition is skewed to basic residues. Residues 1–69 (MKKSKSKKKA…PLDLEGPLEA (69 aa)) are disordered. Residues 12-26 (KAQEVEVKEPVKEPE) show a composition bias toward basic and acidic residues. Acidic residues-rich tracts occupy residues 27–45 (PLPELEAAEDLQDLPEPDP) and 52–69 (PELEDLADPLDLEGPLEA). The tract at residues 93–128 (SDPVRQYLHEIGQVPLLTLEEEIDLARKVEEGMEAI) is sigma-70 factor domain-1. The tract at residues 202 to 272 (LIEANLRLVV…NRAIADQART (71 aa)) is sigma-70 factor domain-2. An Interaction with polymerase core subunit RpoC motif is present at residues 226–229 (DLIQ). The interval 281–359 (ETINKLSRTA…DENLPSPVEA (79 aa)) is sigma-70 factor domain-3. Residues 372–424 (ALSKLSEREAMVLKLRKGLIDGREHTLEEVGAYFGVTRERIRQIENKALRKLK) are sigma-70 factor domain-4. Residues 398 to 417 (LEEVGAYFGVTRERIRQIEN) constitute a DNA-binding region (H-T-H motif).

It belongs to the sigma-70 factor family. RpoD/SigA subfamily. Interacts transiently with the RNA polymerase catalytic core formed by RpoA, RpoB, RpoC and RpoZ (2 alpha, 1 beta, 1 beta' and 1 omega subunit) to form the RNA polymerase holoenzyme that can initiate transcription.

The protein resides in the cytoplasm. In terms of biological role, sigma factors are initiation factors that promote the attachment of RNA polymerase to specific initiation sites and are then released. This sigma factor is the primary sigma factor during exponential growth. This is RNA polymerase sigma factor SigA from Thermus aquaticus.